We begin with the raw amino-acid sequence, 363 residues long: tRNA N6-adenosine threonylcarbamoyltransferase (363 aa).

The Fe cation site is built by histidine 138, histidine 142, and tyrosine 159. Substrate contacts are provided by residues 159–163 (YVSGG), aspartate 191, aspartate 212, and serine 295. Aspartate 323 contacts Fe cation.

This sequence belongs to the KAE1 / TsaD family. It depends on Fe(2+) as a cofactor.

The protein resides in the cytoplasm. It catalyses the reaction L-threonylcarbamoyladenylate + adenosine(37) in tRNA = N(6)-L-threonylcarbamoyladenosine(37) in tRNA + AMP + H(+). In terms of biological role, required for the formation of a threonylcarbamoyl group on adenosine at position 37 (t(6)A37) in tRNAs that read codons beginning with adenine. Is probably involved in the transfer of the threonylcarbamoyl moiety of threonylcarbamoyl-AMP (TC-AMP) to the N6 group of A37. The protein is tRNA N6-adenosine threonylcarbamoyltransferase of Hyperthermus butylicus (strain DSM 5456 / JCM 9403 / PLM1-5).